The chain runs to 267 residues: Energy-coupling factor transporter transmembrane protein EcfT (267 aa).

Transmembrane regions (helical) follow at residues 30–50 (FWYV…LLVA), 67–87 (WAGL…QVLF), 110–130 (ALVI…LTAT), 152–172 (VPVN…PTIM), and 247–267 (SIAL…RILL).

The protein belongs to the energy-coupling factor EcfT family. In terms of assembly, forms a stable energy-coupling factor (ECF) transporter complex composed of 2 membrane-embedded substrate-binding proteins (S component), 2 ATP-binding proteins (A component) and 2 transmembrane proteins (T component). May be able to interact with more than 1 S component at a time.

Its subcellular location is the cell membrane. In terms of biological role, transmembrane (T) component of an energy-coupling factor (ECF) ABC-transporter complex. Unlike classic ABC transporters this ECF transporter provides the energy necessary to transport a number of different substrates. In Limosilactobacillus fermentum (strain CECT 5716 / Lc40) (Lactobacillus fermentum), this protein is Energy-coupling factor transporter transmembrane protein EcfT.